The primary structure comprises 256 residues: Omega-amidase YafV (256 aa).

In terms of domain architecture, CN hydrolase spans 4–234 (LKITLLQQPL…ATRIDAELSM (231 aa)). Catalysis depends on glutamate 42, which acts as the Proton acceptor. The active site involves lysine 107. Cysteine 141 (nucleophile) is an active-site residue.

The protein belongs to the carbon-nitrogen hydrolase superfamily. NIT1/NIT2 family.

It catalyses the reaction a monoamide of a dicarboxylate + H2O = a dicarboxylate + NH4(+). Hydrolyzes alpha-ketoglutaramate (a-KGM) to alpha-ketoglutarate (alpha-KG) and ammonia (specific activity 6.65 umol/min/mg), has weak activity on L-glutamine, almost no activity on deaminated glutathione (dGSH) and none on glutathione. May function as a metabolite repair enzyme. The chain is Omega-amidase YafV (yafV) from Escherichia coli (strain B / BL21-DE3).